Here is a 287-residue protein sequence, read N- to C-terminus: Small ribosomal subunit biogenesis GTPase RsgA (287 aa).

One can recognise a CP-type G domain in the interval 61–218 (SSELIRPTVA…LVDTPGFTTL (158 aa)). Residues 110 to 113 (NKED) and 161 to 169 (GPSGAGKST) contribute to the GTP site. The Zn(2+) site is built by cysteine 242, cysteine 247, histidine 249, and cysteine 255.

This sequence belongs to the TRAFAC class YlqF/YawG GTPase family. RsgA subfamily. In terms of assembly, monomer. Associates with 30S ribosomal subunit, binds 16S rRNA. Requires Zn(2+) as cofactor.

It localises to the cytoplasm. Functionally, one of several proteins that assist in the late maturation steps of the functional core of the 30S ribosomal subunit. Helps release RbfA from mature subunits. May play a role in the assembly of ribosomal proteins into the subunit. Circularly permuted GTPase that catalyzes slow GTP hydrolysis, GTPase activity is stimulated by the 30S ribosomal subunit. The sequence is that of Small ribosomal subunit biogenesis GTPase RsgA from Clostridium perfringens (strain SM101 / Type A).